The chain runs to 252 residues: 3-dehydroquinate dehydratase (252 aa).

Residues 47 to 49 (EWR) and arginine 83 contribute to the 3-dehydroquinate site. Residue histidine 144 is the Proton donor/acceptor of the active site. Catalysis depends on lysine 171, which acts as the Schiff-base intermediate with substrate. 3-dehydroquinate contacts are provided by arginine 213, serine 232, and glutamine 236.

This sequence belongs to the type-I 3-dehydroquinase family. In terms of assembly, homodimer.

It carries out the reaction 3-dehydroquinate = 3-dehydroshikimate + H2O. It participates in metabolic intermediate biosynthesis; chorismate biosynthesis; chorismate from D-erythrose 4-phosphate and phosphoenolpyruvate: step 3/7. Its function is as follows. Involved in the third step of the chorismate pathway, which leads to the biosynthesis of aromatic amino acids. Catalyzes the cis-dehydration of 3-dehydroquinate (DHQ) and introduces the first double bond of the aromatic ring to yield 3-dehydroshikimate. This is 3-dehydroquinate dehydratase from Lactiplantibacillus plantarum (strain ATCC BAA-793 / NCIMB 8826 / WCFS1) (Lactobacillus plantarum).